A 587-amino-acid chain; its full sequence is Methylcrotonoyl-CoA carboxylase beta chain, mitochondrial (587 aa).

A mitochondrion-targeting transit peptide spans 1-26; sequence MLRILGRRVVSASKELTSIQQWRIRP. One can recognise a CoA carboxyltransferase N-terminal domain in the interval 68–324; the sequence is MEGILSELRS…AAKQGMEGTF (257 aa). Residues 68 to 579 are carboxyltransferase; the sequence is MEGILSELRS…SAALNRPLED (512 aa). The CoA carboxyltransferase C-terminal domain occupies 333-579; sequence EPLYDINELR…SAALNRPLED (247 aa). Residues 367–396 form an acyl-CoA binding region; sequence EFDEFKKQYGTTLVTGFARIYGQTVGIIGN.

This sequence belongs to the AccD/PCCB family. In terms of assembly, probably a heterodimer composed of biotin-containing alpha subunits and beta subunits. As to expression, in roots, cotyledons, leaves, flowers, ovaries, siliques and embryos.

It is found in the mitochondrion matrix. The catalysed reaction is 3-methylbut-2-enoyl-CoA + hydrogencarbonate + ATP = 3-methyl-(2E)-glutaconyl-CoA + ADP + phosphate + H(+). Its pathway is amino-acid degradation; L-leucine degradation; (S)-3-hydroxy-3-methylglutaryl-CoA from 3-isovaleryl-CoA: step 2/3. Carboxyltransferase subunit of the 3-methylcrotonyl-CoA carboxylase, an enzyme that catalyzes the conversion of 3-methylcrotonyl-CoA to 3-methylglutaconyl-CoA, a critical step for leucine and isovaleric acid catabolism. The protein is Methylcrotonoyl-CoA carboxylase beta chain, mitochondrial (MCCB) of Arabidopsis thaliana (Mouse-ear cress).